The sequence spans 192 residues: Interleukin-18 (192 aa).

The propeptide occupies 1–35 (MAAMSEDSCVNFKEMMFIDNTLYFIPEENGDLESD).

The protein belongs to the IL-1 family. As to quaternary structure, forms a ternary complex with ligand-binding receptor subunit IL18R1 and signaling receptor subunit IL18RAP at the plasma membrane. Mature IL18 first binds to IL18R1 forming a low affinity binary complex, which then interacts with IL18RAP to form a high affinity ternary complex that signals inside the cell. Interacts with cargo receptor TMED10; the interaction mediates the translocation from the cytoplasm into the ERGIC (endoplasmic reticulum-Golgi intermediate compartment) and thereby secretion. Post-translationally, the pro-IL-18 precursor is processed by CASP1 to yield its mature, active form. The pro-IL-18 precursor is however not processed by Casp4/Casp11 in rodents. The pro-IL-18 precursor features autoinhibitory interactions between the propeptide and the post-cleavage-site region, preventing recognition by the IL18R1 receptor. Processing by CASP1 induces conformational changes to generate critical receptor-binding sites. The mature form is then secreted and released in the extracellular milieu by passing through the gasdermin-D (GSDMD) pore. In contrast, cleavage by CASP3 inactivates IL18.

Its subcellular location is the cytoplasm. It localises to the secreted. Pro-inflammatory cytokine primarily involved in epithelial barrier repair, polarized T-helper 1 (Th1) cell and natural killer (NK) cell immune responses. Upon binding to IL18R1 and IL18RAP, forms a signaling ternary complex which activates NF-kappa-B, triggering synthesis of inflammatory mediators. Synergizes with IL12/interleukin-12 to induce IFNG synthesis from T-helper 1 (Th1) cells and natural killer (NK) cells. Involved in transduction of inflammation downstream of pyroptosis: its mature form is specifically released in the extracellular milieu by passing through the gasdermin-D (GSDMD) pore. The polypeptide is Interleukin-18 (Mus musculus (Mouse)).